The sequence spans 374 residues: Palmitoyltransferase PFA5 (374 aa).

Residues 1–13 (MALSWNIRIRRRS) lie on the Cytoplasmic side of the membrane. The helical transmembrane segment at 14–34 (WFRFILPIIVLGLLCYGTWAY) threads the bilayer. Topologically, residues 35-55 (CHKLCYEQVDKRLRQKSVSVG) are lumenal. A helical membrane pass occupies residues 56–76 (LICAVCFLDVVVIFIWLQIVI). Residues 77 to 173 (LVGPGTQPHV…TVIGRDNYRL (97 aa)) are Cytoplasmic-facing. In terms of domain architecture, DHHC spans 129–179 (IWCSECQSLKMERTHHSSELGHCIPRFDHYCMWIGTVIGRDNYRLFVQFAA). Residues 174–194 (FVQFAAYFSTLLLIMWVSICV) form a helical membrane-spanning segment. Residues 195–217 (YIRIITQHNHNYSPNLNANIIST) are Lumenal-facing. Residues 218–238 (LVFAILGWLLTASLLASSIFY) form a helical membrane-spanning segment. Over 239 to 374 (MSQNKTSLEA…ASGDDSDPAY (136 aa)) the chain is Cytoplasmic.

This sequence belongs to the DHHC palmitoyltransferase family. PFA5 subfamily. Autopalmitoylated.

It localises to the membrane. The catalysed reaction is L-cysteinyl-[protein] + hexadecanoyl-CoA = S-hexadecanoyl-L-cysteinyl-[protein] + CoA. The polypeptide is Palmitoyltransferase PFA5 (PFA5) (Saccharomyces cerevisiae (strain ATCC 204508 / S288c) (Baker's yeast)).